The sequence spans 408 residues: MSAQNLAPPLNTLDFDKKPEETRVVVAMSGGVDSSVVAGLLKQQGYDVLGITLQLYDHGAAVHRAGSCCAGQDIDDARRVCETLGIPHYVLDYEKRFRETVINPFAESYVAGETPIPCVSCNQTVKFADLLATAKELGADALATGHYIRSRPNPSPEHPGRRALFRPADADRDQSYFLFATTQEQIDYLRFPLGGLPKAETRRLAEEMGLVVAKKADSQDICFVPQGKYSDIITKLKPNAALAGEIVHLDGRVLGTHEGILHFTIGQRRGIGIATGEPLYVVYLDARSRRVIVGPKEALETHRVYLRDVNWLGDETLGEAASGEGFACYAKVRSTRAPAPAVLHVDATGTYVDLTVGEAGIAPGQACALYSAPGDDARVFGGGFIERSEREPAAEASLKALLASPVAA.

Residues 27–34 (AMSGGVDS) and Leu-53 contribute to the ATP site. Cys-121 acts as the Nucleophile in catalysis. Cys-121 and Cys-222 are oxidised to a cystine. Gly-145 contacts ATP. The tract at residues 172–174 (RDQ) is interaction with tRNA. Residue Cys-222 is the Cysteine persulfide intermediate of the active site.

Belongs to the MnmA/TRMU family.

Its subcellular location is the cytoplasm. It carries out the reaction S-sulfanyl-L-cysteinyl-[protein] + uridine(34) in tRNA + AH2 + ATP = 2-thiouridine(34) in tRNA + L-cysteinyl-[protein] + A + AMP + diphosphate + H(+). Catalyzes the 2-thiolation of uridine at the wobble position (U34) of tRNA, leading to the formation of s(2)U34. This chain is tRNA-specific 2-thiouridylase MnmA, found in Rhizobium etli (strain CIAT 652).